The primary structure comprises 509 residues: Kynureninase 1 (509 aa).

Pyridoxal 5'-phosphate-binding positions include L154, T155, 183–186, D270, H273, and Y295; that span reads FPSD. At K296 the chain carries N6-(pyridoxal phosphate)lysine. W345 and N373 together coordinate pyridoxal 5'-phosphate.

It belongs to the kynureninase family. In terms of assembly, homodimer. Pyridoxal 5'-phosphate serves as cofactor.

It localises to the cytoplasm. It carries out the reaction L-kynurenine + H2O = anthranilate + L-alanine + H(+). The enzyme catalyses 3-hydroxy-L-kynurenine + H2O = 3-hydroxyanthranilate + L-alanine + H(+). It participates in amino-acid degradation; L-kynurenine degradation; L-alanine and anthranilate from L-kynurenine: step 1/1. It functions in the pathway cofactor biosynthesis; NAD(+) biosynthesis; quinolinate from L-kynurenine: step 2/3. Catalyzes the cleavage of L-kynurenine (L-Kyn) and L-3-hydroxykynurenine (L-3OHKyn) into anthranilic acid (AA) and 3-hydroxyanthranilic acid (3-OHAA), respectively. This is Kynureninase 1 from Chaetomium globosum (strain ATCC 6205 / CBS 148.51 / DSM 1962 / NBRC 6347 / NRRL 1970) (Soil fungus).